The following is a 729-amino-acid chain: DNA topoisomerase 3 (729 aa).

The Toprim domain maps to 3–136 (KSVVIAEKPS…IKRLWISSVT (134 aa)). 2 residues coordinate Mg(2+): Glu-9 and Asp-105. Residues 153–594 (YDNLYASAVA…EMKNYTKEIV (442 aa)) form the Topo IA-type catalytic domain. The interaction with DNA stretch occupies residues 187–192 (NCGRVQ). Tyr-310 functions as the O-(5'-phospho-DNA)-tyrosine intermediate in the catalytic mechanism. Residues 686–713 (ERRKKESGNKADKRDVQKYMKQQKKEEE) are compositionally biased toward basic and acidic residues. Positions 686 to 718 (ERRKKESGNKADKRDVQKYMKQQKKEEEPLNNP) are disordered.

The protein belongs to the type IA topoisomerase family. The cofactor is Mg(2+).

It carries out the reaction ATP-independent breakage of single-stranded DNA, followed by passage and rejoining.. In terms of biological role, releases the supercoiling and torsional tension of DNA, which is introduced during the DNA replication and transcription, by transiently cleaving and rejoining one strand of the DNA duplex. Introduces a single-strand break via transesterification at a target site in duplex DNA. The scissile phosphodiester is attacked by the catalytic tyrosine of the enzyme, resulting in the formation of a DNA-(5'-phosphotyrosyl)-enzyme intermediate and the expulsion of a 3'-OH DNA strand. The free DNA strand then undergoes passage around the unbroken strand, thus removing DNA supercoils. Finally, in the religation step, the DNA 3'-OH attacks the covalent intermediate to expel the active-site tyrosine and restore the DNA phosphodiester backbone. The polypeptide is DNA topoisomerase 3 (Bacillus cereus (strain ZK / E33L)).